Here is a 380-residue protein sequence, read N- to C-terminus: Erythronate-4-phosphate dehydrogenase (380 aa).

Residues serine 45 and threonine 66 each coordinate substrate. NAD(+)-binding positions include 126-127 (QV), aspartate 146, threonine 174, 205-207 (ASR), and aspartate 231. Residue arginine 207 is part of the active site. Residue glutamate 236 is part of the active site. Histidine 253 acts as the Proton donor in catalysis. Glycine 256 is an NAD(+) binding site. Tyrosine 257 is a binding site for substrate.

This sequence belongs to the D-isomer specific 2-hydroxyacid dehydrogenase family. PdxB subfamily. Homodimer.

It localises to the cytoplasm. It catalyses the reaction 4-phospho-D-erythronate + NAD(+) = (R)-3-hydroxy-2-oxo-4-phosphooxybutanoate + NADH + H(+). It functions in the pathway cofactor biosynthesis; pyridoxine 5'-phosphate biosynthesis; pyridoxine 5'-phosphate from D-erythrose 4-phosphate: step 2/5. Functionally, catalyzes the oxidation of erythronate-4-phosphate to 3-hydroxy-2-oxo-4-phosphonooxybutanoate. This Pseudomonas syringae pv. tomato (strain ATCC BAA-871 / DC3000) protein is Erythronate-4-phosphate dehydrogenase.